Consider the following 283-residue polypeptide: Pantothenate synthetase (283 aa).

Position 30 to 37 (30 to 37) interacts with ATP; sequence MGNLHDGH. The Proton donor role is filled by His-37. Residue Gln-61 participates in (R)-pantoate binding. Gln-61 provides a ligand contact to beta-alanine. 149–152 contacts ATP; that stretch reads GEKD. Residue Gln-155 participates in (R)-pantoate binding. ATP-binding positions include Met-178 and 186-189; that span reads LSSR.

It belongs to the pantothenate synthetase family. In terms of assembly, homodimer.

It is found in the cytoplasm. It carries out the reaction (R)-pantoate + beta-alanine + ATP = (R)-pantothenate + AMP + diphosphate + H(+). The protein operates within cofactor biosynthesis; (R)-pantothenate biosynthesis; (R)-pantothenate from (R)-pantoate and beta-alanine: step 1/1. Activation requires a combination of a divalent cation, magnesium or manganese, and a monovalent cation, potassium or ammonium. Above the optimum concentration for activation, magnesium and manganese are rather inhibitory. Also activated by 2-mercaptoethanol, dithiothreitol, cysteine and glutathione. Inhibited by divalent cations (mercury, cobalt, zinc, copper, silver), chelating agents (EDTA, EGTA and o-phenanthroline), and analogs of beta-alanine (taurine, gamma-aminobutyrate, gamma-amino-beta-hydroxybutyrate). Its function is as follows. Catalyzes the condensation of pantoate with beta-alanine in an ATP-dependent reaction via a pantoyl-adenylate intermediate. This Escherichia coli (strain K12) protein is Pantothenate synthetase (panC).